A 247-amino-acid polypeptide reads, in one-letter code: MVKILLENEPYLVARIDNQSLNPYMFGERYGFGIEAQNEQNSKIKKVIEHYEKKVASGKVPIRESKSLFIKDTKETPDSLKFLQYLYDKGNEENLKLYIAVNLKQNKDVFYQAVMSNKKKLVKKILSYNPKCIDYTNSEGHNVLHIALKNKAKADAEMIEILLQCKPKLITEKNKENLTPLMFGEKYGFSEVLSKKEIDKIKAILKDYERDAIRYDSYLPDPPNEKMVDFEDELLGNNLGGVNGTEL.

2 ANK repeats span residues 105 to 135 (QNKD…CIDY) and 139 to 171 (EGHN…KLIT).

In Rickettsia bellii (strain RML369-C), this protein is Putative ankyrin repeat protein RBE_1110.